The primary structure comprises 294 residues: 33 kDa chaperonin (294 aa).

Intrachain disulfides connect Cys-239-Cys-241 and Cys-272-Cys-275.

Belongs to the HSP33 family. In terms of processing, under oxidizing conditions two disulfide bonds are formed involving the reactive cysteines. Under reducing conditions zinc is bound to the reactive cysteines and the protein is inactive.

The protein resides in the cytoplasm. In terms of biological role, redox regulated molecular chaperone. Protects both thermally unfolding and oxidatively damaged proteins from irreversible aggregation. Plays an important role in the bacterial defense system toward oxidative stress. This is 33 kDa chaperonin from Listeria monocytogenes serotype 4a (strain HCC23).